Reading from the N-terminus, the 520-residue chain is MSWATRPPFLPPRHAAGQCGPVGVRKEMHCGVASRWRRRRPWLDPAAAAAAAGEQQALEPEPGEAGRDGMGDSGRDSRSPDSSSPNPLSQGIRPSSPPGPPLTPSAPPPPMPPPPLGSPFPVISSSMGSPGLPPPAPPGFSGPVSSPQINSTVSLPGGGSGPPEDVKPPVLGVRGLHCPPPPGGPGAGKRLCAICGDRSSGKHYGVYSCEGCKGFFKRTIRKDLTYSCRDNKDCTVDKRQRNRCQYCRYQKCLATGMKREAVQEERQRGKDKDGDGDGAGGAPEEMPVDRILEAELAVEQKSDQGVEGPGATGGGGSSPNDPVTNICQAADKQLFTLVEWAKRIPHFSSLPLDDQVILLRAGWNELLIASFSHRSIDVRDGILLATGLHVHRNSAHSAGVGAIFDRVLTELVSKMRDMRMDKTELGCLRAIILFNPDAKGLSNPGEVEILREKVYASLETYCKQKYPEQQGRFAKLLLRLPALRSIGLKCLEHLFFFKLIGDTPIDTFLMEMLEAPHQLA.

The interval 1 to 167 is disordered; sequence MSWATRPPFL…GGSGPPEDVK (167 aa). The modulating stretch occupies residues 1–191; the sequence is MSWATRPPFL…PGGPGAGKRL (191 aa). An Omega-N-methylarginine modification is found at arginine 25. The span at 64–79 shows a compositional bias: basic and acidic residues; the sequence is EAGRDGMGDSGRDSRS. Pro residues predominate over residues 95–118; sequence SSPPGPPLTPSAPPPPMPPPPLGS. The segment covering 119 to 130 has biased composition (low complexity); the sequence is PFPVISSSMGSP. Residues 131 to 140 are compositionally biased toward pro residues; sequence GLPPPAPPGF. 2 NR C4-type zinc fingers span residues 192–212 and 228–252; these read CAIC…CEGC and CRDN…YQKC. A DNA-binding region (nuclear receptor) is located at residues 192 to 257; it reads CAICGDRSSG…RYQKCLATGM (66 aa). Residues 258–382 form a hinge region; that stretch reads KREAVQEERQ…HRSIDVRDGI (125 aa). Positions 263-275 are enriched in basic and acidic residues; the sequence is QEERQRGKDKDGD. Disordered stretches follow at residues 263 to 285 and 300 to 323; these read QEER…APEE and QKSD…NDPV. Residues 283–516 form the NR LBD domain; it reads PEEMPVDRIL…TFLMEMLEAP (234 aa). Residues 307–317 show a composition bias toward gly residues; sequence EGPGATGGGGS.

Belongs to the nuclear hormone receptor family. NR2 subfamily. Homodimer (in vitro). Heterodimer with other retinoic acid receptor family members. Binds DNA preferentially as a RAR/RXR heterodimer. Interacts with NR1H3. Interacts with AKAP13. In terms of tissue distribution, in all tissues tested, including brain, thymus, spleen and liver.

It is found in the nucleus. Its subcellular location is the cytoplasm. In terms of biological role, receptor for retinoic acid. Retinoic acid receptors bind as heterodimers to their target response elements in response to their ligands, all-trans or 9-cis retinoic acid, and regulate gene expression in various biological processes. The RAR/RXR heterodimers bind to the retinoic acid response elements (RARE). The sequence is that of Retinoic acid receptor RXR-beta (Rxrb) from Mus musculus (Mouse).